We begin with the raw amino-acid sequence, 399 residues long: S-adenosylmethionine synthase (399 aa).

136–141 (GTGSAD) serves as a coordination point for ATP.

Belongs to the AdoMet synthase 2 family. Mg(2+) serves as cofactor.

The enzyme catalyses L-methionine + ATP + H2O = S-adenosyl-L-methionine + phosphate + diphosphate. It functions in the pathway amino-acid biosynthesis; S-adenosyl-L-methionine biosynthesis; S-adenosyl-L-methionine from L-methionine: step 1/1. In terms of biological role, catalyzes the formation of S-adenosylmethionine from methionine and ATP. In Methanothrix thermoacetophila (strain DSM 6194 / JCM 14653 / NBRC 101360 / PT) (Methanosaeta thermophila), this protein is S-adenosylmethionine synthase.